A 121-amino-acid chain; its full sequence is Large ribosomal subunit protein uL18 (121 aa).

Belongs to the universal ribosomal protein uL18 family. Part of the 50S ribosomal subunit; part of the 5S rRNA/L5/L18/L25 subcomplex. Contacts the 5S and 23S rRNAs.

Functionally, this is one of the proteins that bind and probably mediate the attachment of the 5S RNA into the large ribosomal subunit, where it forms part of the central protuberance. This Streptococcus equi subsp. zooepidemicus (strain MGCS10565) protein is Large ribosomal subunit protein uL18.